The primary structure comprises 580 residues: Conglutin beta 3 (580 aa).

Positions 1-30 (MAKMRVRFPTLVLLLGIVFLMAVSIGIAYG) are cleaved as a signal peptide. 2 stretches are compositionally biased toward basic and acidic residues: residues 37-72 (NHERPQEREQEERDPRQQPRPHHQEEQEREHRRESE) and 79-92 (REQRREPRREREQE). Positions 37–165 (NHERPQEREQ…DSRRQRNPYY (129 aa)) are disordered. Residues 124 to 133 (QGSSSSSRRQ) are compositionally biased toward low complexity. The segment covering 134 to 145 (SGYERREQREER) has biased composition (basic and acidic residues). Cupin type-1 domains lie at 164–322 (YYFS…EEIQ) and 381–538 (FNLR…EDVE). N-linked (GlcNAc...) asparagine glycosylation is found at asparagine 229 and asparagine 488. A disordered region spans residues 549–569 (FANAQPQQQQQREREGRHGRR).

It belongs to the 7S seed storage protein family. In terms of assembly, component of globulins complexes which accumulate in seeds.

In terms of biological role, seed storage protein. Accumulates during seed development and is hydrolyzed after germination to provide a carbon and nitrogen source for the developing seedling. This chain is Conglutin beta 3, found in Lupinus angustifolius (Narrow-leaved blue lupine).